Consider the following 251-residue polypeptide: Zinc import ATP-binding protein ZnuC (251 aa).

The 216-residue stretch at 5-220 (VSLENVSVSF…PEFISMFGPR (216 aa)) folds into the ABC transporter domain. Position 37 to 44 (37 to 44 (GPNGAGKS)) interacts with ATP.

This sequence belongs to the ABC transporter superfamily. Zinc importer (TC 3.A.1.15.5) family. The complex is composed of two ATP-binding proteins (ZnuC), two transmembrane proteins (ZnuB) and a solute-binding protein (ZnuA).

The protein localises to the cell inner membrane. It carries out the reaction Zn(2+)(out) + ATP(in) + H2O(in) = Zn(2+)(in) + ADP(in) + phosphate(in) + H(+)(in). Part of the ABC transporter complex ZnuABC involved in zinc import. Responsible for energy coupling to the transport system. In Shigella dysenteriae serotype 1 (strain Sd197), this protein is Zinc import ATP-binding protein ZnuC.